The chain runs to 362 residues: Stress response regulator protein 1 (362 aa).

Disordered regions lie at residues 1–39 and 163–188; these read MTRL…SLVQ and TLKS…ETKT. Positions 19–39 are enriched in low complexity; sequence PSQLLHSASLSSSPSSPSLVQ. The 119-residue stretch at 209 to 327 folds into the Response regulatory domain; that stretch reads KFLLVDDNLI…LDFMANVIDE (119 aa). At Asp-260 the chain carries 4-aspartylphosphate.

In terms of biological role, required for stress adaptation, morphogenesis and virulence. In Lodderomyces elongisporus (strain ATCC 11503 / CBS 2605 / JCM 1781 / NBRC 1676 / NRRL YB-4239) (Yeast), this protein is Stress response regulator protein 1 (SRR1).